An 86-amino-acid chain; its full sequence is ATP synthase subunit c (86 aa).

2 helical membrane-spanning segments follow: residues 13-33 (FFATGLAYLGAGISILAAGLA) and 63-83 (ILGQAMVETSGIYALIIAFIL).

Belongs to the ATPase C chain family. F-type ATPases have 2 components, F(1) - the catalytic core - and F(0) - the membrane proton channel. F(1) has five subunits: alpha(3), beta(3), gamma(1), delta(1), epsilon(1). F(0) has three main subunits: a(1), b(2) and c(10-14). The alpha and beta chains form an alternating ring which encloses part of the gamma chain. F(1) is attached to F(0) by a central stalk formed by the gamma and epsilon chains, while a peripheral stalk is formed by the delta and b chains.

The protein localises to the cell membrane. F(1)F(0) ATP synthase produces ATP from ADP in the presence of a proton or sodium gradient. F-type ATPases consist of two structural domains, F(1) containing the extramembraneous catalytic core and F(0) containing the membrane proton channel, linked together by a central stalk and a peripheral stalk. During catalysis, ATP synthesis in the catalytic domain of F(1) is coupled via a rotary mechanism of the central stalk subunits to proton translocation. Functionally, key component of the F(0) channel; it plays a direct role in translocation across the membrane. A homomeric c-ring of between 10-14 subunits forms the central stalk rotor element with the F(1) delta and epsilon subunits. The sequence is that of ATP synthase subunit c from Acholeplasma laidlawii (strain PG-8A).